The chain runs to 325 residues: Tetraacyldisaccharide 4'-kinase (325 aa).

An ATP-binding site is contributed by 51–58 (VVGGAGKT).

The protein belongs to the LpxK family.

It carries out the reaction a lipid A disaccharide + ATP = a lipid IVA + ADP + H(+). It functions in the pathway glycolipid biosynthesis; lipid IV(A) biosynthesis; lipid IV(A) from (3R)-3-hydroxytetradecanoyl-[acyl-carrier-protein] and UDP-N-acetyl-alpha-D-glucosamine: step 6/6. In terms of biological role, transfers the gamma-phosphate of ATP to the 4'-position of a tetraacyldisaccharide 1-phosphate intermediate (termed DS-1-P) to form tetraacyldisaccharide 1,4'-bis-phosphate (lipid IVA). This chain is Tetraacyldisaccharide 4'-kinase, found in Paramagnetospirillum magneticum (strain ATCC 700264 / AMB-1) (Magnetospirillum magneticum).